The following is a 666-amino-acid chain: Threonine--tRNA ligase (666 aa).

Residues 7-70 (QQVTLTVTLP…TADCTAEIIT (64 aa)) enclose the TGS domain. The tract at residues 253-555 (DHRKLGTELE…LIEHTAGNFP (303 aa)) is catalytic. Residues Cys-351, His-402, and His-532 each coordinate Zn(2+).

It belongs to the class-II aminoacyl-tRNA synthetase family. In terms of assembly, homodimer. It depends on Zn(2+) as a cofactor.

The protein localises to the cytoplasm. It carries out the reaction tRNA(Thr) + L-threonine + ATP = L-threonyl-tRNA(Thr) + AMP + diphosphate + H(+). Its function is as follows. Catalyzes the attachment of threonine to tRNA(Thr) in a two-step reaction: L-threonine is first activated by ATP to form Thr-AMP and then transferred to the acceptor end of tRNA(Thr). Also edits incorrectly charged L-seryl-tRNA(Thr). The polypeptide is Threonine--tRNA ligase (Chlorobium phaeovibrioides (strain DSM 265 / 1930) (Prosthecochloris vibrioformis (strain DSM 265))).